A 239-amino-acid polypeptide reads, in one-letter code: MIENQSDNIDNKENDLSDQDNALENVSSAQELTTENNELSSQKTEEINTEELKNSISNNDARLEQLEKEHETLKNQYVRISADFDNFRKRQSRDQDDLKIQLVSKTLTAILPIVDNFERARQQLKPESEEAQSLHRSYQGLYKQLVEVLKQQGVSPMRVVGQQFDPSLHEAVLREPSEKFEEDFIIEELQRGYHLEGKVLRHALVKVSMGPGKQNSQEEVEKDKVEGDIDSEENTSEDV.

Disordered regions lie at residues 1–54 (MIEN…ELKN) and 208–239 (SMGP…SEDV). Residues 19–42 (QDNALENVSSAQELTTENNELSSQ) show a composition bias toward polar residues. Positions 43–53 (KTEEINTEELK) are enriched in basic and acidic residues. Acidic residues predominate over residues 228 to 239 (DIDSEENTSEDV).

The protein belongs to the GrpE family. Homodimer.

The protein localises to the cytoplasm. In terms of biological role, participates actively in the response to hyperosmotic and heat shock by preventing the aggregation of stress-denatured proteins, in association with DnaK and GrpE. It is the nucleotide exchange factor for DnaK and may function as a thermosensor. Unfolded proteins bind initially to DnaJ; upon interaction with the DnaJ-bound protein, DnaK hydrolyzes its bound ATP, resulting in the formation of a stable complex. GrpE releases ADP from DnaK; ATP binding to DnaK triggers the release of the substrate protein, thus completing the reaction cycle. Several rounds of ATP-dependent interactions between DnaJ, DnaK and GrpE are required for fully efficient folding. This is Protein GrpE from Prochlorococcus marinus (strain AS9601).